The sequence spans 259 residues: 3-deoxy-manno-octulosonate cytidylyltransferase (259 aa).

Belongs to the KdsB family.

Its subcellular location is the cytoplasm. The catalysed reaction is 3-deoxy-alpha-D-manno-oct-2-ulosonate + CTP = CMP-3-deoxy-beta-D-manno-octulosonate + diphosphate. The protein operates within nucleotide-sugar biosynthesis; CMP-3-deoxy-D-manno-octulosonate biosynthesis; CMP-3-deoxy-D-manno-octulosonate from 3-deoxy-D-manno-octulosonate and CTP: step 1/1. It participates in bacterial outer membrane biogenesis; lipopolysaccharide biosynthesis. Its function is as follows. Activates KDO (a required 8-carbon sugar) for incorporation into bacterial lipopolysaccharide in Gram-negative bacteria. In Xanthomonas oryzae pv. oryzae (strain KACC10331 / KXO85), this protein is 3-deoxy-manno-octulosonate cytidylyltransferase.